We begin with the raw amino-acid sequence, 515 residues long: ATP synthase subunit alpha (515 aa).

171 to 178 (GDRQTGKT) contributes to the ATP binding site.

The protein belongs to the ATPase alpha/beta chains family. In terms of assembly, F-type ATPases have 2 components, CF(1) - the catalytic core - and CF(0) - the membrane proton channel. CF(1) has five subunits: alpha(3), beta(3), gamma(1), delta(1), epsilon(1). CF(0) has three main subunits: a(1), b(2) and c(9-12). The alpha and beta chains form an alternating ring which encloses part of the gamma chain. CF(1) is attached to CF(0) by a central stalk formed by the gamma and epsilon chains, while a peripheral stalk is formed by the delta and b chains.

Its subcellular location is the cell inner membrane. It carries out the reaction ATP + H2O + 4 H(+)(in) = ADP + phosphate + 5 H(+)(out). Functionally, produces ATP from ADP in the presence of a proton gradient across the membrane. The alpha chain is a regulatory subunit. In Xanthomonas campestris pv. campestris (strain 8004), this protein is ATP synthase subunit alpha.